A 346-amino-acid chain; its full sequence is Glucose-6-phosphatase 3 (346 aa).

Residues 1–24 are Lumenal-facing; the sequence is MESTLGAGIVIAEALQNQLAWLEN. The helical transmembrane segment at 25 to 45 threads the bilayer; sequence VWLWITFLGDPKILFLFYFPA. Residues 46–54 lie on the Cytoplasmic side of the membrane; the sequence is AYYASRRVG. A helical membrane pass occupies residues 55-75; sequence IAVLWISLITEWLNLIFKWFL. At 76–114 the chain is on the lumenal side; sequence FGDRPFWWVHESGYYSQAPAQVHQFPSSCETGPGSPSGH. R79 provides a ligand contact to substrate. Catalysis depends on H114, which acts as the Proton donor. Residues 115–135 form a helical membrane-spanning segment; sequence CMITGAALWPIMTALSSQVAT. The Cytoplasmic portion of the chain corresponds to 136–146; it reads RARSRWVRVMP. Residues 147–164 form a helical membrane-spanning segment; the sequence is SLAYCTFLLAVGLSRIFI. R161 serves as a coordination point for substrate. Topologically, residues 165-169 are lumenal; the sequence is LAHFP. The active-site Nucleophile is H167. The chain crosses the membrane as a helical span at residues 170–186; the sequence is HQVLAGLITGAVLGWLM. Residues 187-197 are Cytoplasmic-facing; the sequence is TPRVPMERELS. The helical transmembrane segment at 198–218 threads the bilayer; that stretch reads FYGLTALALMLGTSLIYWTLF. At 219 to 254 the chain is on the lumenal side; it reads TLGLDLSWSISLAFKWCERPEWIHVDSRPFASLSRD. The helical transmembrane segment at 255–273 threads the bilayer; that stretch reads SGAALGLGIALHSPCYAQV. At 274–283 the chain is on the cytoplasmic side; it reads RRAQLGNGQK. A helical membrane pass occupies residues 284 to 304; that stretch reads IACLVLAMGLLGPLDWLGHPP. The Lumenal portion of the chain corresponds to 305–307; sequence QIS. The helical transmembrane segment at 308–328 threads the bilayer; the sequence is LFYIFNFLKYTLWPCLVLALV. Topologically, residues 329–346 are cytoplasmic; the sequence is PWAVHMFSAQEAPPIHSS.

Belongs to the glucose-6-phosphatase family. Ubiquitously expressed. Highly expressed in skeletal muscle, at intermediate levels in heart, brain, placenta, kidney, colon, thymus, spleen and pancreas. Also detected in testis, prostate, ovary, liver, lung, small intestine and peripheral blood lymphocytes.

The protein resides in the endoplasmic reticulum membrane. It catalyses the reaction D-glucose 6-phosphate + H2O = D-glucose + phosphate. It functions in the pathway carbohydrate biosynthesis; gluconeogenesis. Its activity is regulated as follows. Inhibited by vanadate. Its function is as follows. Hydrolyzes glucose-6-phosphate to glucose in the endoplasmic reticulum. May form with the glucose-6-phosphate transporter (SLC37A4/G6PT) a ubiquitously expressed complex responsible for glucose production through glycogenolysis and gluconeogenesis. Probably required for normal neutrophil function. This chain is Glucose-6-phosphatase 3 (G6PC3), found in Homo sapiens (Human).